Reading from the N-terminus, the 644-residue chain is Exoribonuclease 2 (644 aa).

Residues 189–516 (REDLTALNFV…NHRLLKAMIT (328 aa)) enclose the RNB domain. In terms of domain architecture, S1 motif spans 561–643 (DTRFTAEIID…ETRNVIARPV (83 aa)).

Belongs to the RNR ribonuclease family. RNase II subfamily.

It localises to the cytoplasm. The enzyme catalyses Exonucleolytic cleavage in the 3'- to 5'-direction to yield nucleoside 5'-phosphates.. Its function is as follows. Involved in mRNA degradation. Hydrolyzes single-stranded polyribonucleotides processively in the 3' to 5' direction. This is Exoribonuclease 2 from Yersinia pseudotuberculosis serotype IB (strain PB1/+).